Here is a 284-residue protein sequence, read N- to C-terminus: Small ribosomal subunit protein uS2 (284 aa).

Belongs to the universal ribosomal protein uS2 family.

The protein is Small ribosomal subunit protein uS2 (rpsB) of Mycoplasma genitalium (strain ATCC 33530 / DSM 19775 / NCTC 10195 / G37) (Mycoplasmoides genitalium).